A 795-amino-acid polypeptide reads, in one-letter code: Phenylalanine--tRNA ligase beta subunit (795 aa).

Residues 39 to 148 form the tRNA-binding domain; that stretch reads AGAFHGVVVG…ADAPIGTDIR (110 aa). Residues 401–476 enclose the B5 domain; that stretch reads PTRATITLRR…RIYGYNNIPN (76 aa). Residues D454, D460, E463, and E464 each coordinate Mg(2+). One can recognise an FDX-ACB domain in the interval 701–794; it reads SRFPANRRDI…LKQRFQASLR (94 aa).

Belongs to the phenylalanyl-tRNA synthetase beta subunit family. Type 1 subfamily. In terms of assembly, tetramer of two alpha and two beta subunits. Requires Mg(2+) as cofactor.

It localises to the cytoplasm. It carries out the reaction tRNA(Phe) + L-phenylalanine + ATP = L-phenylalanyl-tRNA(Phe) + AMP + diphosphate + H(+). The chain is Phenylalanine--tRNA ligase beta subunit from Pectobacterium atrosepticum (strain SCRI 1043 / ATCC BAA-672) (Erwinia carotovora subsp. atroseptica).